Reading from the N-terminus, the 122-residue chain is MIQMQTVLDVADNSGARKVQCIKVLGGSKRRYASVGDVIKVAVKEAAPRGKVKKGDVFDAVVVRTAQGVRRPDGSKIKFDGNAAVILNTKLEPIGTRIFGPVTRELRNDKFMKIVSLAPEVL.

This sequence belongs to the universal ribosomal protein uL14 family. Part of the 50S ribosomal subunit. Forms a cluster with proteins L3 and L19. In the 70S ribosome, L14 and L19 interact and together make contacts with the 16S rRNA in bridges B5 and B8.

Binds to 23S rRNA. Forms part of two intersubunit bridges in the 70S ribosome. This chain is Large ribosomal subunit protein uL14, found in Hydrogenovibrio crunogenus (strain DSM 25203 / XCL-2) (Thiomicrospira crunogena).